The chain runs to 257 residues: MSLIDIQNLTIKNTCEKYLIKGIDLKIFSQQINALIGESGAGKSLIAKALLEYLPFDLSCTYDSYQFDGENISRLSQYYGHTIGYISQNYAESFNDHTKLGKQLTAIYRKHYKSSKEEALSKIDKALSWVNLQSKDILNKYSFQLSGGQLERVYIASVLMLEPKLIIADEPVASLDALNGNQVMDLLQHIVLEHGQTLFIITHNLSHVLKYCQYIYVLKEGQIIERGNINHFKYEHLHPYTERLIKYRTQLKRDYYD.

In terms of domain architecture, ABC transporter spans 4–245 (IDIQNLTIKN…HLHPYTERLI (242 aa)). An ATP-binding site is contributed by 37–44 (GESGAGKS).

It belongs to the ABC transporter superfamily. In terms of assembly, the complex is composed of two ATP-binding proteins (NikD and NikE), two transmembrane proteins (NikB and NikC) and a solute-binding protein (NikA).

The protein resides in the cell membrane. It carries out the reaction Ni(2+)(out) + ATP + H2O = Ni(2+)(in) + ADP + phosphate + H(+). In terms of biological role, part of the ABC transporter complex NikABCDE (Opp2) involved in nickel import. Probably responsible for energy coupling to the transport system. The chain is Nickel import system ATP-binding protein NikD from Staphylococcus aureus (strain Mu50 / ATCC 700699).